Reading from the N-terminus, the 241-residue chain is Zinc finger CCHC domain-containing protein 24 (241 aa).

S65 and S93 each carry phosphoserine. Residues 132 to 149 form a CCHC-type zinc finger; the sequence is YLCHLCFNKGHYIKDCPQ.

In Macaca fascicularis (Crab-eating macaque), this protein is Zinc finger CCHC domain-containing protein 24 (ZCCHC24).